A 114-amino-acid polypeptide reads, in one-letter code: Dihydroneopterin monophosphate aldolase (114 aa).

H15, H26, and H28 together coordinate Zn(2+).

This sequence belongs to the PTPS family. It depends on Zn(2+) as a cofactor.

The enzyme catalyses 7,8-dihydroneopterin 3'-phosphate = glycolaldehyde phosphate + 6-hydroxymethyl-7,8-dihydropterin. Functionally, catalyzes the conversion of 7,8-dihydroneopterin monophosphate (H2NMP) to 6-hydroxymethyl-7,8-dihydropterin (6-HMD). Cannot use 7,8-dihydroneopterin (H2Neo) or 7,8-dihydroneopterin triphosphate (H2NTP) as substrate. The protein is Dihydroneopterin monophosphate aldolase of Pyrococcus furiosus (strain ATCC 43587 / DSM 3638 / JCM 8422 / Vc1).